Consider the following 269-residue polypeptide: Protein BASIC PENTACYSTEINE3 (269 aa).

Belongs to the BBR/BPC family. Expressed in seedlings, leaves and pistils. Detected in the base of flowers and tips of carpels, in petal vasculature, in anthers, in young rosette, in the lateral and primary roots, and in the gynobasal portion of the ovule.

The protein localises to the nucleus. In terms of biological role, transcriptional regulator that specifically binds to GA-rich elements (GAGA-repeats) present in regulatory sequences of genes involved in developmental processes. In Arabidopsis thaliana (Mouse-ear cress), this protein is Protein BASIC PENTACYSTEINE3 (BPC3).